The primary structure comprises 405 residues: Putative phosphate permease PYRAB14010 (405 aa).

The next 11 helical transmembrane spans lie at 3-23, 44-64, 82-102, 114-134, 138-158, 181-201, 207-227, 264-284, 287-307, 329-349, and 384-404; these read MDPWLLLTLILGLAMAWAIGA, AVLIAGILEFTGAYFFGKTVT, VLVYGSLAALLGATIWLVIAT, IIGGIVGYGVVYAGLEIVNWG, SVVLSWILSPIVGAIFAFFIF, VWIGLAFVVIGTMFYIKVLHG, GVLKLGIPVGLVVFLITSMIL, VANAIGPVAAVYTIATMGMAG, VPVPRWILALGGLGIAIGVAT, FTIDFSAATVVLIASWLGMPI, and FVTVPVAGLISAIIFKILWIV.

It belongs to the inorganic phosphate transporter (PiT) (TC 2.A.20) family.

It localises to the cell membrane. Potential transporter for phosphate. The polypeptide is Putative phosphate permease PYRAB14010 (Pyrococcus abyssi (strain GE5 / Orsay)).